We begin with the raw amino-acid sequence, 227 residues long: UPF0173 metal-dependent hydrolase BCQ_4418 (227 aa).

It belongs to the UPF0173 family.

This Bacillus cereus (strain Q1) protein is UPF0173 metal-dependent hydrolase BCQ_4418.